Here is a 544-residue protein sequence, read N- to C-terminus: Serine/threonine-protein kinase bur1 (544 aa).

The 302-residue stretch at 25–326 folds into the Protein kinase domain; that stretch reads FEFLGKLGEG…AIDALKHPYF (302 aa). ATP-binding positions include 31–39 and lysine 54; that span reads LGEGTFGEV. Aspartate 155 serves as the catalytic Proton acceptor. Residues 357–544 are disordered; it reads AAMPPAPAGG…ERVDRGPYRR (188 aa). Polar residues predominate over residues 374 to 403; sequence GGWSTNSGSRTGAETRNPRISSAARSQGNQ. Basic and acidic residues-rich tracts occupy residues 419–438, 456–466, 488–511, and 532–544; these read RGNE…HRDG, HSDKTGRDRGY, DRNR…DKSH, and NYRE…PYRR.

This sequence belongs to the protein kinase superfamily. CMGC Ser/Thr protein kinase family. CDC2/CDKX subfamily.

The protein localises to the nucleus. The catalysed reaction is L-seryl-[protein] + ATP = O-phospho-L-seryl-[protein] + ADP + H(+). The enzyme catalyses L-threonyl-[protein] + ATP = O-phospho-L-threonyl-[protein] + ADP + H(+). It catalyses the reaction [DNA-directed RNA polymerase] + ATP = phospho-[DNA-directed RNA polymerase] + ADP + H(+). Serine/threonine-protein kinase involved in transcription regulation. Phosphorylates the UBC2/RAD6 ubiquitin-conjugating enzyme (E2), leading to monoubiquitination of histone H2B and the silencing of telomeric-associated genes. Also required for histone H3 methylation. Necessary for the recovery from pheromone-induced growth arrest in the cell cycle G1 phase. The protein is Serine/threonine-protein kinase bur1 (ptkA) of Emericella nidulans (strain FGSC A4 / ATCC 38163 / CBS 112.46 / NRRL 194 / M139) (Aspergillus nidulans).